Reading from the N-terminus, the 293-residue chain is MRQKEVLAKSFQGPAAVCRTPNSHVYMFNNGSGDSGDSSEEESHQVVLRPRGKEHQKNSSQRPGAGTMVLLQRELAQEDSLNKLALQYGCKVADIKKANNFIREQDLYALKSIKIPVRNHGILTETHQELMPLGASSSETRVTLVDLPEDEDAGGATTQGNQLTDFFKGIDENIERAVHSDVFHGDSCCVEAPDQLLLPITQKPVADGADCGIQWWNAVFLMLLIGIVLPVFYLVYFKIQATGEPSNGLNATVVPNGSMTLSPVPGQAPRLAIPVPTLPASDSQVSPTTQAGA.

Residues 1-214 (MRQKEVLAKS…VADGADCGIQ (214 aa)) are Extracellular-facing. Residues 28 to 65 (FNNGSGDSGDSSEEESHQVVLRPRGKEHQKNSSQRPGA) are disordered. N-linked (GlcNAc...) asparagine glycosylation is present at Asn-30. A LysM domain is found at 71-115 (LQRELAQEDSLNKLALQYGCKVADIKKANNFIREQDLYALKSIKI). A helical membrane pass occupies residues 215 to 235 (WWNAVFLMLLIGIVLPVFYLV). Over 236 to 293 (YFKIQATGEPSNGLNATVVPNGSMTLSPVPGQAPRLAIPVPTLPASDSQVSPTTQAGA) the chain is Cytoplasmic.

Its subcellular location is the membrane. The chain is LysM and putative peptidoglycan-binding domain-containing protein 4 (Lysmd4) from Mus musculus (Mouse).